A 324-amino-acid polypeptide reads, in one-letter code: Acetyl-coenzyme A carboxylase carboxyl transferase subunit alpha (324 aa).

The CoA carboxyltransferase C-terminal domain maps to 44–298 (RFQDKLTKLQ…RKELIKQLNI (255 aa)).

Belongs to the AccA family. In terms of assembly, acetyl-CoA carboxylase is a heterohexamer composed of biotin carboxyl carrier protein (accB), biotin carboxylase (accC) and two subunits each of ACCase subunit alpha (accA) and ACCase subunit beta (accD).

It is found in the plastid. It localises to the chloroplast. The catalysed reaction is N(6)-carboxybiotinyl-L-lysyl-[protein] + acetyl-CoA = N(6)-biotinyl-L-lysyl-[protein] + malonyl-CoA. The protein operates within lipid metabolism; malonyl-CoA biosynthesis; malonyl-CoA from acetyl-CoA: step 1/1. In terms of biological role, component of the acetyl coenzyme A carboxylase (ACC) complex. First, biotin carboxylase catalyzes the carboxylation of biotin on its carrier protein (BCCP) and then the CO(2) group is transferred by the carboxyltransferase to acetyl-CoA to form malonyl-CoA. This chain is Acetyl-coenzyme A carboxylase carboxyl transferase subunit alpha, found in Porphyra purpurea (Red seaweed).